The chain runs to 70 residues: Putative membrane protein insertion efficiency factor (70 aa).

Belongs to the UPF0161 family.

The protein resides in the cell inner membrane. Functionally, could be involved in insertion of integral membrane proteins into the membrane. The chain is Putative membrane protein insertion efficiency factor from Methylobacillus flagellatus (strain ATCC 51484 / DSM 6875 / VKM B-1610 / KT).